The primary structure comprises 273 residues: Undecaprenyl-diphosphatase (273 aa).

Helical transmembrane passes span 3 to 23, 48 to 68, 92 to 112, 116 to 136, 152 to 172, 193 to 213, 220 to 240, and 252 to 272; these read IVEI…EFAP, AANT…VVVF, MQVI…EDYI, LFST…MIAA, ITYK…WPGF, ADFT…LSLL, TIDA…FALI, and IRLV…YIVY.

The protein belongs to the UppP family.

The protein localises to the cell membrane. The enzyme catalyses di-trans,octa-cis-undecaprenyl diphosphate + H2O = di-trans,octa-cis-undecaprenyl phosphate + phosphate + H(+). Catalyzes the dephosphorylation of undecaprenyl diphosphate (UPP). Confers resistance to bacitracin. This chain is Undecaprenyl-diphosphatase, found in Geobacillus sp. (strain WCH70).